The following is a 612-amino-acid chain: MNKFCLLPFHGKRIGVANIPFTILFKKGPYFLHSHITAVYYSTKGKNDSHEQSRVSKKSTFTPLETPWYLRIVDNEKELMEGKKNNHHTMNKELEIPKTSPNSLRKIADLLTGKLGLDDFLVFDLRKKSPNSVSAVNKLGDFMVICTARSTKHCHKSFLELNKFLKHEFCSSAYVEGNFNERQESRRKRRLARKSNLSKLLGRSSECSAKDLNSEAWYMIDCRVDGIFVNILTQRRRNELNLEELYAPENEKSKFQNIDSGNVPTISGVNEISSNNNILLGLRRLAQQRRRYSTINPNGLSNLRYFLQKEDFKGANKIIQSSSGTETHNIRTLEHVKNTLKDLVGQERKVDVVQWKSLFDEHSTFLTINQSAAYWPLRLEYAILLNKADPQFYSDRVFLKDYLLLKKSLGQELIREDLIALLEMVLKTQHSSHSYFNLVKQNRVIIRALNLFKGLQTEDDGSVVYDEVVISLLLNSMVADERVKLRSLYETIDHIFQTFGDKLTSGMIVSILQNLAKIKDWNKLLQVWEAITPTEGEGQDKRPWNEFINVINQSGDSHVISKIVNNGHLLWIRRLNVNVTPELCNSIKALLKTAGMENSTLEEFLVRGTNNQ.

The transit peptide at 1 to 14 (MNKFCLLPFHGKRI) directs the protein to the mitochondrion.

This sequence belongs to the ATP25 family.

Its subcellular location is the mitochondrion inner membrane. In terms of biological role, mRNA stabilization factor specific for the 0.95 kb OLI1 mRNA. Also involved in OLI1 ring formation. In Saccharomyces cerevisiae (strain JAY291) (Baker's yeast), this protein is ATPase synthesis protein 25, mitochondrial (ATP25).